A 207-amino-acid chain; its full sequence is Probable isochorismatase (207 aa).

The protein belongs to the isochorismatase family.

It catalyses the reaction isochorismate + H2O = (2S,3S)-2,3-dihydroxy-2,3-dihydrobenzoate + pyruvate. It functions in the pathway antibiotic biosynthesis; phenazine biosynthesis. In terms of biological role, involved in the biosynthesis of the antibiotic phenazine, a nitrogen-containing heterocyclic molecule having important roles in virulence, competition and biological control. This isochorismatase may remove pyruvate from chorismate during the formation of the phenazine ring structure and/or stabilize the phenazine biosynthetic complex. The polypeptide is Probable isochorismatase (phzA) (Pseudomonas chlororaphis (Pseudomonas aureofaciens)).